The following is a 205-amino-acid chain: Beta-crystallin B2 (205 aa).

Residue Ala2 is modified to N-acetylalanine. Residues 2–16 (ASDHQTQAGKPQPLN) are N-terminal arm. Beta/gamma crystallin 'Greek key' domains follow at residues 17 to 56 (PKII…LVQA) and 57 to 101 (GPWV…RPIK). The interval 102 to 106 (VDSQE) is connecting peptide. Beta/gamma crystallin 'Greek key' domains follow at residues 107–148 (HKII…RVQS) and 149–191 (GTWV…RRIR). Positions 193–205 (MQWHQRGAFHPSN) are C-terminal arm.

Belongs to the beta/gamma-crystallin family. In terms of assembly, homo/heterodimer, or complexes of higher-order. The structure of beta-crystallin oligomers seems to be stabilized through interactions between the N-terminal arms.

In terms of biological role, crystallins are the dominant structural components of the vertebrate eye lens. This is Beta-crystallin B2 (CRYBB2) from Canis lupus familiaris (Dog).